The sequence spans 318 residues: Ubiquitin-like domain-containing CTD phosphatase 1 (318 aa).

Ala2 carries the N-acetylalanine modification. The Ubiquitin-like domain maps to 3-81 (LPIIVKWGGQ…IMMMGTREES (79 aa)). Lys117 is subject to N6-acetyllysine. The FCP1 homology domain occupies 133 to 294 (PREGKKLLVL…LKLTQYLKEI (162 aa)). Asp143, Asp145, and Asp253 together coordinate Mg(2+).

It depends on Mg(2+) as a cofactor.

The protein resides in the nucleus. The enzyme catalyses O-phospho-L-seryl-[protein] + H2O = L-seryl-[protein] + phosphate. It carries out the reaction O-phospho-L-threonyl-[protein] + H2O = L-threonyl-[protein] + phosphate. In terms of biological role, dephosphorylates 26S nuclear proteasomes, thereby decreasing their proteolytic activity. Recruited to the 19S regulatory particle of the 26S proteasome through its interaction with 19S component PSMD2/RPN1. Once recruited, dephosphorylates 19S component PSMC2/RPT1 which impairs PSMC2 ATPase activity and disrupts 26S proteasome assembly. Has also been reported to stimulate the proteolytic activity of the 26S proteasome. The sequence is that of Ubiquitin-like domain-containing CTD phosphatase 1 (UBLCP1) from Bos taurus (Bovine).